The primary structure comprises 377 residues: MASSEQAEQPSQPSSTPGSENVLPREPLIATAVKFLQNSRVRQSPLATRRAFLKKKGLTDEEIDMAFQQSGTAADEPSSLGPATQVVPVQPPHLISQPYSPAGSRWRDYGALAIIMAGIAFGFHQLYKKYLLPLILGGREDRKQLERMEAGLSELSGSVAQTVTQLQTTLASVQELLIQQQQKIQELAHELAAAKATTSTNWILESQNINELKSEINSLKGLLLNRRQFPPSPSAPKIPSWQIPVKSPSPSSPAAVNHHSSSDISPVSNESTSSSPGKEGHSPEGSTVTYHLLGPQEEGEGVVDVKGQVRMEVQGEEEKREDKEDEEDEEDDDVSHVDEEDCLGVQREDRRGGDGQINEQVEKLRRPEGASNESERD.

A compositionally biased stretch (low complexity) spans 1–15 (MASSEQAEQPSQPSS). Residues 1–24 (MASSEQAEQPSQPSSTPGSENVLP) are disordered. An N-acetylalanine modification is found at A2. Topologically, residues 2–108 (ASSEQAEQPS…YSPAGSRWRD (107 aa)) are peroxisomal matrix. K34 is modified (N6-acetyllysine). A helical membrane pass occupies residues 109–126 (YGALAIIMAGIAFGFHQL). The Cytoplasmic portion of the chain corresponds to 127–377 (YKKYLLPLIL…EGASNESERD (251 aa)). Residues 230 to 377 (PPSPSAPKIP…EGASNESERD (148 aa)) are disordered. S232 carries the phosphoserine modification. Composition is skewed to low complexity over residues 244 to 259 (PVKSPSPSSPAAVNHH) and 265 to 275 (SPVSNESTSSS). A phosphoserine mark is found at S282 and S335. Positions 323–342 (KEDEEDEEDDDVSHVDEEDC) are enriched in acidic residues. Residues 360-377 (QVEKLRRPEGASNESERD) are compositionally biased toward basic and acidic residues.

It belongs to the peroxin-14 family. Interacts with PEX13; forming the PEX13-PEX14 docking complex. Interacts with PEX5 (via WxxxF/Y motifs). Interacts with PEX19. Interacts with tubulin.

It is found in the peroxisome membrane. In terms of biological role, component of the PEX13-PEX14 docking complex, a translocon channel that specifically mediates the import of peroxisomal cargo proteins bound to PEX5 receptor. The PEX13-PEX14 docking complex forms a large import pore which can be opened to a diameter of about 9 nm. Mechanistically, PEX5 receptor along with cargo proteins associates with the PEX14 subunit of the PEX13-PEX14 docking complex in the cytosol, leading to the insertion of the receptor into the organelle membrane with the concomitant translocation of the cargo into the peroxisome matrix. Plays a key role for peroxisome movement through a direct interaction with tubulin. The sequence is that of Peroxisomal membrane protein PEX14 from Homo sapiens (Human).